We begin with the raw amino-acid sequence, 292 residues long: uncharacterized protein (292 aa).

Lys8 is covalently cross-linked (Glycyl lysine isopeptide (Lys-Gly) (interchain with G-Cter in SUMO2)). The segment at 47–67 (TKRKMLPSSSSRMRSDGFDEE) is disordered. Residue Lys76 forms a Glycyl lysine isopeptide (Lys-Gly) (interchain with G-Cter in SUMO2) linkage. The residue at position 94 (Asn94) is a Phosphothreonine. Phosphoserine is present on residues Lys96 and Phe97. Residues 122 to 292 (ETDSDQQDIT…ERSAESSEDD (171 aa)) are disordered. Phosphothreonine is present on Thr123. 2 positions are modified to phosphoserine: Ser125 and Asp126. Positions 128-140 (QDITNGKKTSPQV) are enriched in polar residues. Residues 147-173 (SRKHKKSKKSHKKKQKKRSHKKQKKSK) are compositionally biased toward basic residues. The span at 180–194 (TADSSSEFSEETGAS) shows a compositional bias: polar residues. 2 stretches are compositionally biased toward basic residues: residues 197 to 215 (RKGK…KSLK) and 247 to 259 (KKTK…KKAH). Residues 280 to 292 (ATDERSAESSEDD) show a composition bias toward basic and acidic residues.

This is an uncharacterized protein from Homo sapiens (Human).